The following is a 430-amino-acid chain: Tol-Pal system protein TolB (430 aa).

The first 21 residues, 1–21 (MKQALRVAFGFLILWASVLHA), serve as a signal peptide directing secretion.

It belongs to the TolB family. As to quaternary structure, the Tol-Pal system is composed of five core proteins: the inner membrane proteins TolA, TolQ and TolR, the periplasmic protein TolB and the outer membrane protein Pal. They form a network linking the inner and outer membranes and the peptidoglycan layer.

It localises to the periplasm. Part of the Tol-Pal system, which plays a role in outer membrane invagination during cell division and is important for maintaining outer membrane integrity. TolB occupies a key intermediary position in the Tol-Pal system because it communicates directly with both membrane-embedded components, Pal in the outer membrane and TolA in the inner membrane. This Shigella boydii serotype 18 (strain CDC 3083-94 / BS512) protein is Tol-Pal system protein TolB.